The sequence spans 355 residues: Adenine deaminase (355 aa).

Residues His23, His25, and His211 each contribute to the Zn(2+) site. Glu214 functions as the Proton donor in the catalytic mechanism. Asp292 lines the Zn(2+) pocket. Asp293 contributes to the substrate binding site.

Belongs to the metallo-dependent hydrolases superfamily. Adenosine and AMP deaminases family. Adenine deaminase type 2 subfamily. Requires Zn(2+) as cofactor.

It localises to the cytoplasm. The protein resides in the nucleus. The enzyme catalyses adenine + H2O + H(+) = hypoxanthine + NH4(+). Its function is as follows. Catalyzes the hydrolytic deamination of adenine to hypoxanthine. Plays an important role in the purine salvage pathway and in nitrogen catabolism. The chain is Adenine deaminase from Kluyveromyces lactis (strain ATCC 8585 / CBS 2359 / DSM 70799 / NBRC 1267 / NRRL Y-1140 / WM37) (Yeast).